Here is a 340-residue protein sequence, read N- to C-terminus: Glycerol-3-phosphate dehydrogenase [NAD(P)+] (340 aa).

NADPH-binding residues include S11, W12, R33, and K106. Sn-glycerol 3-phosphate-binding residues include K106, G137, and S139. A141 is an NADPH binding site. The sn-glycerol 3-phosphate site is built by K192, D245, S255, R256, and N257. The active-site Proton acceptor is K192. R256 contributes to the NADPH binding site. Residues V280 and E282 each coordinate NADPH.

The protein belongs to the NAD-dependent glycerol-3-phosphate dehydrogenase family.

Its subcellular location is the cytoplasm. It catalyses the reaction sn-glycerol 3-phosphate + NAD(+) = dihydroxyacetone phosphate + NADH + H(+). The catalysed reaction is sn-glycerol 3-phosphate + NADP(+) = dihydroxyacetone phosphate + NADPH + H(+). It functions in the pathway membrane lipid metabolism; glycerophospholipid metabolism. Its function is as follows. Catalyzes the reduction of the glycolytic intermediate dihydroxyacetone phosphate (DHAP) to sn-glycerol 3-phosphate (G3P), the key precursor for phospholipid synthesis. This is Glycerol-3-phosphate dehydrogenase [NAD(P)+] from Bacillus cereus (strain G9842).